Here is a 231-residue protein sequence, read N- to C-terminus: Superoxide dismutase [Mn] 1, mitochondrial (231 aa).

A mitochondrion-targeting transit peptide spans 1-29 (MAIRCVASRKTLAGLKETSSRLLRIRGIQ). Mn(2+) is bound by residues histidine 55 and histidine 103. Residue serine 124 is modified to Phosphoserine. Mn(2+) contacts are provided by aspartate 192 and histidine 196.

It belongs to the iron/manganese superoxide dismutase family. Homotetramer. It depends on Mn(2+) as a cofactor.

Its subcellular location is the mitochondrion matrix. It catalyses the reaction 2 superoxide + 2 H(+) = H2O2 + O2. With respect to regulation, activated by MTM1. Functionally, destroys superoxide anion radicals which are normally produced within the cells and which are toxic to biological systems. The chain is Superoxide dismutase [Mn] 1, mitochondrial (MSD1) from Arabidopsis thaliana (Mouse-ear cress).